Reading from the N-terminus, the 429-residue chain is Glutamate-1-semialdehyde 2,1-aminomutase (429 aa).

An N6-(pyridoxal phosphate)lysine modification is found at K267.

This sequence belongs to the class-III pyridoxal-phosphate-dependent aminotransferase family. HemL subfamily. In terms of assembly, homodimer. Pyridoxal 5'-phosphate is required as a cofactor.

Its subcellular location is the cytoplasm. It carries out the reaction (S)-4-amino-5-oxopentanoate = 5-aminolevulinate. Its pathway is porphyrin-containing compound metabolism; protoporphyrin-IX biosynthesis; 5-aminolevulinate from L-glutamyl-tRNA(Glu): step 2/2. This chain is Glutamate-1-semialdehyde 2,1-aminomutase, found in Stenotrophomonas maltophilia (strain R551-3).